The chain runs to 303 residues: Cathepsin B-like CP1 (303 aa).

The signal sequence occupies residues 1 to 19 (MALSLLLAVVCAKPLVSRA). N-linked (GlcNAc...) asparagine glycosylation occurs at asparagine 41. 3 disulfide bridges follow: cysteine 92–cysteine 119, cysteine 102–cysteine 145, and cysteine 138–cysteine 181. Cysteine 105 is an active-site residue. Active-site residues include histidine 249 and asparagine 270.

This sequence belongs to the peptidase C1 family.

It is found in the vacuole. Thiol protease which is required for parasite excystation and invasion of the proximal small intestine of the human host. In Giardia intestinalis (Giardia lamblia), this protein is Cathepsin B-like CP1 (CP1).